The following is a 391-amino-acid chain: MLATKTKPMIVSMGPHHPSMHGVLRLIVTLDGENVIDCEPILGYLHRGMEKIAENRTIVQYLPYVTRWDYLATMFTEAITVNAPEKLTNIQVPKRASYIRMIMLELSRVASHLLWLGPFMADIGAQTPFFYILREREMIYDLFEAATGMRMMHNYFRIGGVAVDLPYGWIDKCLDFCDYFLPKVNEYERLITNNPIFLKRVEGIGIIGKEEAINWGLSGPMLRASGVQWDLRKVDHYECYDELDWQIQWQKEGDSLARYLVRIGEMKESIKIIQQALKSIPGGPYENLEARRLQRGKKSEWNNFEYQFISKKPSPTFKLPKQEHYIRVEAPKGELGVFLIGDDSVFPWRWKIRPPGFINLQILPQLVKGMKLADIMTILGSIDIIMGEVDR.

It belongs to the complex I 49 kDa subunit family. NDH is composed of at least 16 different subunits, 5 of which are encoded in the nucleus.

The protein localises to the plastid. The protein resides in the chloroplast thylakoid membrane. The enzyme catalyses a plastoquinone + NADH + (n+1) H(+)(in) = a plastoquinol + NAD(+) + n H(+)(out). The catalysed reaction is a plastoquinone + NADPH + (n+1) H(+)(in) = a plastoquinol + NADP(+) + n H(+)(out). NDH shuttles electrons from NAD(P)H:plastoquinone, via FMN and iron-sulfur (Fe-S) centers, to quinones in the photosynthetic chain and possibly in a chloroplast respiratory chain. The immediate electron acceptor for the enzyme in this species is believed to be plastoquinone. Couples the redox reaction to proton translocation, and thus conserves the redox energy in a proton gradient. In Physcomitrium patens (Spreading-leaved earth moss), this protein is NAD(P)H-quinone oxidoreductase subunit H, chloroplastic.